The following is a 301-amino-acid chain: GTPase Era (301 aa).

The Era-type G domain occupies 6–173; it reads KSGFVAIVGR…LEQTNANLEI (168 aa). Positions 14 to 21 are G1; sequence GRPNVGKS. 14–21 serves as a coordination point for GTP; the sequence is GRPNVGKS. Residues 40–44 are G2; sequence QTTRN. The G3 stretch occupies residues 61–64; that stretch reads DTPG. GTP contacts are provided by residues 61–65 and 123–126; these read DTPGI and NKID. Residues 123-126 form a G4 region; that stretch reads NKID. Residues 152–154 form a G5 region; sequence ISA. Residues 204 to 282 form the KH type-2 domain; that stretch reads TREEVPHSVA…FLEIWVKVQK (79 aa).

It belongs to the TRAFAC class TrmE-Era-EngA-EngB-Septin-like GTPase superfamily. Era GTPase family. As to quaternary structure, monomer.

It localises to the cytoplasm. Its subcellular location is the cell membrane. In terms of biological role, an essential GTPase that binds both GDP and GTP, with rapid nucleotide exchange. Plays a role in 16S rRNA processing and 30S ribosomal subunit biogenesis and possibly also in cell cycle regulation and energy metabolism. This Listeria welshimeri serovar 6b (strain ATCC 35897 / DSM 20650 / CCUG 15529 / CIP 8149 / NCTC 11857 / SLCC 5334 / V8) protein is GTPase Era.